A 422-amino-acid polypeptide reads, in one-letter code: Anhydromevalonate phosphate decarboxylase (422 aa).

Mn(2+)-binding residues include asparagine 134 and glutamate 197. Aspartate 244 acts as the Proton acceptor in catalysis.

The protein belongs to the UbiD family. Prenylated FMN is required as a cofactor. The cofactor is Mn(2+).

It carries out the reaction (2E)-3-methyl-5-phosphooxypent-2-enoate + H(+) = isopentenyl phosphate + CO2. It participates in isoprenoid biosynthesis; isopentenyl diphosphate biosynthesis via mevalonate pathway. Its function is as follows. Catalyzes the conversion of trans-anhydromevalonate 5-phosphate (tAHMP) into isopentenyl phosphate. Involved in the archaeal mevalonate (MVA) pathway, which provides fundamental precursors for isoprenoid biosynthesis, such as isopentenyl diphosphate (IPP) and dimethylallyl diphosphate (DMAPP). This is Anhydromevalonate phosphate decarboxylase from Methanosarcina mazei (strain ATCC BAA-159 / DSM 3647 / Goe1 / Go1 / JCM 11833 / OCM 88) (Methanosarcina frisia).